The chain runs to 189 residues: B3 domain-containing protein At2g32645 (189 aa).

A DNA-binding region (TF-B3) is located at residues 33-133 (FNQVKTPDFL…KLCFALTPKI (101 aa)).

Its subcellular location is the nucleus. The protein is B3 domain-containing protein At2g32645 of Arabidopsis thaliana (Mouse-ear cress).